A 309-amino-acid polypeptide reads, in one-letter code: uncharacterized protein (309 aa).

Over residues 1-16 (MAGNSRRRGAVRKAGT) the composition is skewed to basic residues. The tract at residues 1 to 70 (MAGNSRRRGA…AKRTEETETV (70 aa)) is disordered. The S-adenosyl-L-methionine site is built by glycine 261, isoleucine 281, and leucine 290.

The protein belongs to the class IV-like SAM-binding methyltransferase superfamily. RNA methyltransferase TrmH family.

This is an uncharacterized protein from Mycolicibacterium paratuberculosis (strain ATCC BAA-968 / K-10) (Mycobacterium paratuberculosis).